Consider the following 451-residue polypeptide: Serine--tRNA ligase (451 aa).

247 to 249 (TAE) lines the L-serine pocket. ATP is bound by residues 278 to 280 (RKE) and V294. An L-serine-binding site is contributed by E301. 365 to 368 (ELAS) provides a ligand contact to ATP. An L-serine-binding site is contributed by T400.

This sequence belongs to the class-II aminoacyl-tRNA synthetase family. Type-1 seryl-tRNA synthetase subfamily. In terms of assembly, homodimer. The tRNA molecule binds across the dimer.

It localises to the cytoplasm. It catalyses the reaction tRNA(Ser) + L-serine + ATP = L-seryl-tRNA(Ser) + AMP + diphosphate + H(+). The enzyme catalyses tRNA(Sec) + L-serine + ATP = L-seryl-tRNA(Sec) + AMP + diphosphate + H(+). The protein operates within aminoacyl-tRNA biosynthesis; selenocysteinyl-tRNA(Sec) biosynthesis; L-seryl-tRNA(Sec) from L-serine and tRNA(Sec): step 1/1. Catalyzes the attachment of serine to tRNA(Ser). Is also able to aminoacylate tRNA(Sec) with serine, to form the misacylated tRNA L-seryl-tRNA(Sec), which will be further converted into selenocysteinyl-tRNA(Sec). The chain is Serine--tRNA ligase from Pyrobaculum aerophilum (strain ATCC 51768 / DSM 7523 / JCM 9630 / CIP 104966 / NBRC 100827 / IM2).